Reading from the N-terminus, the 354-residue chain is Histidinol-phosphate aminotransferase (354 aa).

At Lys210 the chain carries N6-(pyridoxal phosphate)lysine.

It belongs to the class-II pyridoxal-phosphate-dependent aminotransferase family. Histidinol-phosphate aminotransferase subfamily. As to quaternary structure, homodimer. The cofactor is pyridoxal 5'-phosphate.

The catalysed reaction is L-histidinol phosphate + 2-oxoglutarate = 3-(imidazol-4-yl)-2-oxopropyl phosphate + L-glutamate. It participates in amino-acid biosynthesis; L-histidine biosynthesis; L-histidine from 5-phospho-alpha-D-ribose 1-diphosphate: step 7/9. The protein is Histidinol-phosphate aminotransferase of Clostridium botulinum (strain Langeland / NCTC 10281 / Type F).